A 185-amino-acid chain; its full sequence is Ribosome-recycling factor (185 aa).

The protein belongs to the RRF family.

It localises to the cytoplasm. Functionally, responsible for the release of ribosomes from messenger RNA at the termination of protein biosynthesis. May increase the efficiency of translation by recycling ribosomes from one round of translation to another. This chain is Ribosome-recycling factor, found in Kocuria rhizophila (strain ATCC 9341 / DSM 348 / NBRC 103217 / DC2201).